The following is a 203-amino-acid chain: MSSSSDKLFNRDRTIHEILGGGIVADVMLWRKKNVSVGIVTVTIASWMVFEAFAYTIFTLISSVLLLLLSILFLWSKSASILNRPSPPLPEFQISEAMAEEASIWLRIHVNKLLQVSHDIAMARDSELYTKVAVSLFLLSLIGSLMDFQTLCHTSVLVVMTVPAFYERYEDYIVGSIEFICNKTRELYLRLEIWANPENKKLS.

The region spanning 24–203 is the Reticulon domain; that stretch reads VADVMLWRKK…WANPENKKLS (180 aa). Helical transmembrane passes span 34–54, 55–75, and 132–152; these read NVSVGIVTVTIASWMVFEAFA, YTIFTLISSVLLLLLSILFLW, and VAVSLFLLSLIGSLMDFQTLC.

The protein localises to the endoplasmic reticulum membrane. The polypeptide is Reticulon-like protein B12 (RTNLB12) (Arabidopsis thaliana (Mouse-ear cress)).